A 364-amino-acid polypeptide reads, in one-letter code: MKVIISGGGTGGHVYPGIAIADVLKQKNAENQILFVGAGGKMEMSQVPAAGYPIVGLPIRGINRKLKYIWKNLALPIWVLISLWKVKRIIKDFKPNVVIGTGGYAGFPTIYMAARMHIPIVLQEQNAYAGVANRLLAKYAHKICVAYEGMDAYFPSNKVVLTGNPVRAFLTDKADNYLPSLQYFGLEPGIITVLVLGGSLGAQAISESIIKAAHIFEKHTIQVILSTGNAYFSTIQQADFPAFNKNFKILPYIERMDLAFAAANIVVSRAGAISIAEIASAQKPAIFIPSPNVTADHQMKNVLPLVTKNAAILIKDNEVPDKLVPAILELAKDKQRQRMLVENLSSCFKTHAAESIASLIEDLV.

UDP-N-acetyl-alpha-D-glucosamine-binding positions include 10 to 12, asparagine 126, arginine 167, serine 199, isoleucine 253, and glutamine 298; that span reads TGG.

It belongs to the glycosyltransferase 28 family. MurG subfamily.

The protein localises to the cell inner membrane. It carries out the reaction di-trans,octa-cis-undecaprenyl diphospho-N-acetyl-alpha-D-muramoyl-L-alanyl-D-glutamyl-meso-2,6-diaminopimeloyl-D-alanyl-D-alanine + UDP-N-acetyl-alpha-D-glucosamine = di-trans,octa-cis-undecaprenyl diphospho-[N-acetyl-alpha-D-glucosaminyl-(1-&gt;4)]-N-acetyl-alpha-D-muramoyl-L-alanyl-D-glutamyl-meso-2,6-diaminopimeloyl-D-alanyl-D-alanine + UDP + H(+). The protein operates within cell wall biogenesis; peptidoglycan biosynthesis. Its function is as follows. Cell wall formation. Catalyzes the transfer of a GlcNAc subunit on undecaprenyl-pyrophosphoryl-MurNAc-pentapeptide (lipid intermediate I) to form undecaprenyl-pyrophosphoryl-MurNAc-(pentapeptide)GlcNAc (lipid intermediate II). This chain is UDP-N-acetylglucosamine--N-acetylmuramyl-(pentapeptide) pyrophosphoryl-undecaprenol N-acetylglucosamine transferase, found in Amoebophilus asiaticus (strain 5a2).